Reading from the N-terminus, the 101-residue chain is Small ribosomal subunit protein uS14 (101 aa).

The protein belongs to the universal ribosomal protein uS14 family. In terms of assembly, part of the 30S ribosomal subunit. Contacts proteins S3 and S10.

Functionally, binds 16S rRNA, required for the assembly of 30S particles and may also be responsible for determining the conformation of the 16S rRNA at the A site. The polypeptide is Small ribosomal subunit protein uS14 (Shewanella loihica (strain ATCC BAA-1088 / PV-4)).